Reading from the N-terminus, the 340-residue chain is Phenylalanine--tRNA ligase alpha subunit (340 aa).

Glu255 serves as a coordination point for Mg(2+).

Belongs to the class-II aminoacyl-tRNA synthetase family. Phe-tRNA synthetase alpha subunit type 1 subfamily. As to quaternary structure, tetramer of two alpha and two beta subunits. Requires Mg(2+) as cofactor.

It localises to the cytoplasm. The catalysed reaction is tRNA(Phe) + L-phenylalanine + ATP = L-phenylalanyl-tRNA(Phe) + AMP + diphosphate + H(+). This chain is Phenylalanine--tRNA ligase alpha subunit, found in Desulfitobacterium hafniense (strain Y51).